The following is a 118-amino-acid chain: Hisactophilin-1 (118 aa).

Residue glycine 2 is the site of N-myristoyl glycine attachment. A contains several HHXH repeats region spans residues 8-109; that stretch reads SHHGHFLSAE…HVSTKEHHDH (102 aa). Repeat copies occupy residues 34 to 46 and 74 to 86. The interval 34 to 86 is 2 X 13 AA approximate repeats; it reads FHVENHGGKVALKTHCGKYLSIGDHKQVYLSHHLHGDHSLFHLEHHGGKVSIK.

Belongs to the hisactophilin family. In terms of assembly, homodimer or heterodimer of hatA and hatB, linked by a disulfide bond. Post-translationally, phosphorylated.

The protein localises to the cytoplasm. Its subcellular location is the cell membrane. May act as an intracellular pH sensor that links chemotactic signals to responses in the microfilament system of the cells by nucleating actin polymerization or stabilizing the filaments. The polypeptide is Hisactophilin-1 (hatA) (Dictyostelium discoideum (Social amoeba)).